Consider the following 651-residue polypeptide: Acetyl-coenzyme A synthetase (651 aa).

CoA is bound by residues 189 to 192 (RGGK), T311, and N335. ATP-binding positions include 387–389 (GEP), 411–416 (DTWWQT), D500, and R515. S523 is a binding site for CoA. R526 contacts ATP. 3 residues coordinate Mg(2+): V537, H539, and V542. Position 586 (R586) interacts with CoA. K611 carries the N6-acetyllysine modification.

Belongs to the ATP-dependent AMP-binding enzyme family. The cofactor is Mg(2+). In terms of processing, acetylated. Deacetylation by the SIR2-homolog deacetylase activates the enzyme.

The catalysed reaction is acetate + ATP + CoA = acetyl-CoA + AMP + diphosphate. Its function is as follows. Catalyzes the conversion of acetate into acetyl-CoA (AcCoA), an essential intermediate at the junction of anabolic and catabolic pathways. AcsA undergoes a two-step reaction. In the first half reaction, AcsA combines acetate with ATP to form acetyl-adenylate (AcAMP) intermediate. In the second half reaction, it can then transfer the acetyl group from AcAMP to the sulfhydryl group of CoA, forming the product AcCoA. The chain is Acetyl-coenzyme A synthetase from Brucella melitensis biotype 1 (strain ATCC 23456 / CCUG 17765 / NCTC 10094 / 16M).